The sequence spans 470 residues: MTPPPNSISSRNVAVIGAGAAGLVAARELRREGHTVTIFERQKQVGGLWVCTPNVEPDLLSIDPDRTVVHSSVYQSLRTNLPRECMGYSDFPFVTRPDDESRDPRRYPDHREVMRYLQDFAKEFKIEEMIRFETEVFRVEPTAENSCKWRVQFRSSSGVSGEDIFDAVVICNGHFTEPRLAHIPGIESWPGKQIHSHNYRVSDPFKGQVVIVIGYQSSGSDISRDIAILAKEVHIAAKSDAYAKESSIYSNLHFHPTIDRVYEDGSVVFQDGKLIFADAIVHCTGYKYCFPFLETKGYVNVEDNRVGPLYKHVFPPALAPGLSFIGLPSMALQFFMFEIQSRWVASVLSGRVKLPSEEQMMEDVIAFYAKLKSLGIPKRFTHFLTDPQWTPMFEKLKPHEAVLISQSEYFNWIAEQCGCSSIERWREEQYNIAIKKDDDNFRDEWDDDDQIIQEAYRDFAKFKPSKVWST.

17–22 (GAGAAG) serves as a coordination point for FAD. 214–219 (GYQSSG) contacts NADP(+).

Belongs to the FMO family. The cofactor is FAD.

Its function is as follows. Catalyzes the conversion of methylthioalkyl glucosinolates of any chain length into methylsulfinylalkyl glucosinolates. This is Flavin-containing monooxygenase FMO GS-OX-like 6 from Arabidopsis thaliana (Mouse-ear cress).